A 200-amino-acid polypeptide reads, in one-letter code: Sperm acrosome developmental regulator (200 aa).

Serine 63 is subject to Phosphoserine. A compositionally biased stretch (basic residues) spans 167-183 (QERRRRRRMRSHASHTS). Residues 167–200 (QERRRRRRMRSHASHTSRHSESVQGLKHDARSPL) form a disordered region. The segment covering 184-200 (RHSESVQGLKHDARSPL) has biased composition (basic and acidic residues).

The protein localises to the cytoplasmic vesicle. The protein resides in the secretory vesicle. Its subcellular location is the acrosome. Functionally, may play an important role in acrosome formation and nucleus shaping during spermiogenesis. The chain is Sperm acrosome developmental regulator (Spacdr) from Rattus norvegicus (Rat).